The following is a 55-amino-acid chain: Cop-6 protein (55 aa).

This sequence belongs to the transcriptional regulatory CopG/NikR family.

In terms of biological role, acts in trans as a negative regulatory element in pE194 replication. This is Cop-6 protein from Staphylococcus aureus.